The primary structure comprises 122 residues: Allatotropin (122 aa).

A signal peptide spans 1–23; sequence MRVILAITLLFVAGSFIATASKG. A propeptide spanning residues 24–40 is cleaved from the precursor; sequence RNYPRFFKHRMKLREIR. Phe53 is modified (phenylalanine amide). Positions 57–122 are excised as a propeptide; it reads ESPAERIPDL…GDDSKKGTIA (66 aa).

Expressed in brain and ventral ganglia but not in the retrocerebral complex (at protein level).

It is found in the secreted. Neuropeptide stimulator of juvenile hormone synthesis. This chain is Allatotropin, found in Camponotus floridanus (Florida carpenter ant).